The sequence spans 32 residues: ATP synthase 28 kDa subunit, mitochondrial (32 aa).

It localises to the mitochondrion. The protein resides in the mitochondrion inner membrane. In terms of biological role, mitochondrial membrane ATP synthase (F(1)F(0) ATP synthase or Complex V) produces ATP from ADP in the presence of a proton gradient across the membrane which is generated by electron transport complexes of the respiratory chain. F-type ATPases consist of two structural domains, F(1) - containing the extramembraneous catalytic core and F(0) - containing the membrane proton channel, linked together by a central stalk and a peripheral stalk. During catalysis, ATP synthesis in the catalytic domain of F(1) is coupled via a rotary mechanism of the central stalk subunits to proton translocation. Part of the complex F(0) domain. In Spinacia oleracea (Spinach), this protein is ATP synthase 28 kDa subunit, mitochondrial.